The sequence spans 310 residues: Taste receptor type 2 member 125 (310 aa).

Over 1–2 (MG) the chain is Extracellular. A helical transmembrane segment spans residues 3-23 (IVIGIICAFIIIVQFIIGNVA). At 24-46 (NGFIALVNIIDWVKRRKISLVDQ) the chain is on the cytoplasmic side. A helical transmembrane segment spans residues 47 to 67 (IITALAISRIDMLCSTFLIVL). The Extracellular portion of the chain corresponds to 68–87 (ITSLYPDLNTAVNMVKISNN). A helical transmembrane segment spans residues 88-108 (IWIVANHFSIWLATSLSIFYF). The Cytoplasmic segment spans residues 109–128 (LKIANFSNYVFLCLRWRLSK). The chain crosses the membrane as a helical span at residues 129 to 149 (VVSVTLLLSLVLLLMNILIMN). The Extracellular segment spans residues 150–185 (MHIDTWSDGFKRNVSFGFRSKNCTRFFKLALLINTT). Residues asparagine 162, asparagine 171, and asparagine 183 are each glycosylated (N-linked (GlcNAc...) asparagine). Residues 186–206 (FTCVPFTVSMVAFLLLIFSLW) form a helical membrane-spanning segment. Residues 207–232 (RHLKNMQYHAKGSRDPSTAVHIKALQ) are Cytoplasmic-facing. The chain crosses the membrane as a helical span at residues 233–253 (MVVVFVLFYTFFFLSLAIQLW). Topologically, residues 254-261 (TSESLEKN) are extracellular. Residues 262–282 (NLFYVTLIITFPSVHSCMLIL) traverse the membrane as a helical segment. Residues 283 to 310 (RNSKLRQASLLVLWWLLCRSKDIQTLVP) lie on the Cytoplasmic side of the membrane.

The protein belongs to the G-protein coupled receptor T2R family.

Its subcellular location is the membrane. Its function is as follows. Putative taste receptor which may play a role in the perception of bitterness. This Rattus norvegicus (Rat) protein is Taste receptor type 2 member 125.